The chain runs to 72 residues: MSRLLLLCSSLLRHRAVLFSKPGHPGRLSHSESPQKKILSPTESAVGIVVFFTTFYIPAAYVLSSLKYFKGE.

The N-terminal 29 residues, 1–29, are a transit peptide targeting the mitochondrion; it reads MSRLLLLCSSLLRHRAVLFSKPGHPGRLS. The Mitochondrial matrix portion of the chain corresponds to 30-40; the sequence is HSESPQKKILS. The chain crosses the membrane as a helical span at residues 41-64; it reads PTESAVGIVVFFTTFYIPAAYVLS. The Mitochondrial intermembrane portion of the chain corresponds to 65–72; that stretch reads SLKYFKGE.

The protein belongs to the cytochrome c oxidase VIII family. As to quaternary structure, component of the cytochrome c oxidase (complex IV, CIV), a multisubunit enzyme composed of 14 subunits. The complex is composed of a catalytic core of 3 subunits MT-CO1, MT-CO2 and MT-CO3, encoded in the mitochondrial DNA, and 11 supernumerary subunits COX4I, COX5A, COX5B, COX6A, COX6B, COX6C, COX7A, COX7B, COX7C, COX8 and NDUFA4, which are encoded in the nuclear genome. The complex exists as a monomer or a dimer and forms supercomplexes (SCs) in the inner mitochondrial membrane with NADH-ubiquinone oxidoreductase (complex I, CI) and ubiquinol-cytochrome c oxidoreductase (cytochrome b-c1 complex, complex III, CIII), resulting in different assemblies (supercomplex SCI(1)III(2)IV(1) and megacomplex MCI(2)III(2)IV(2)).

It is found in the mitochondrion inner membrane. It participates in energy metabolism; oxidative phosphorylation. Component of the cytochrome c oxidase, the last enzyme in the mitochondrial electron transport chain which drives oxidative phosphorylation. The respiratory chain contains 3 multisubunit complexes succinate dehydrogenase (complex II, CII), ubiquinol-cytochrome c oxidoreductase (cytochrome b-c1 complex, complex III, CIII) and cytochrome c oxidase (complex IV, CIV), that cooperate to transfer electrons derived from NADH and succinate to molecular oxygen, creating an electrochemical gradient over the inner membrane that drives transmembrane transport and the ATP synthase. Cytochrome c oxidase is the component of the respiratory chain that catalyzes the reduction of oxygen to water. Electrons originating from reduced cytochrome c in the intermembrane space (IMS) are transferred via the dinuclear copper A center (CU(A)) of subunit 2 and heme A of subunit 1 to the active site in subunit 1, a binuclear center (BNC) formed by heme A3 and copper B (CU(B)). The BNC reduces molecular oxygen to 2 water molecules using 4 electrons from cytochrome c in the IMS and 4 protons from the mitochondrial matrix. The polypeptide is Cytochrome c oxidase subunit 8C, mitochondrial (Cox8c) (Mus musculus (Mouse)).